Here is a 356-residue protein sequence, read N- to C-terminus: Arginine kinase Lit v 2.0101 (356 aa).

Residues 9–91 (KLEAGFKKLE…FDPIIEDYHV (83 aa)) form the Phosphagen kinase N-terminal domain. 64–68 (GVGIY) contributes to the L-arginine binding site. The Phosphagen kinase C-terminal domain occupies 119–356 (FVISTRVRCG…LELIKIEKEM (238 aa)). ATP is bound by residues 122–126 (STRVR) and H185. Residue E225 coordinates L-arginine. Residue R229 participates in ATP binding. C271 serves as a coordination point for L-arginine. ATP contacts are provided by residues 280-284 (RASVH) and 309-314 (RGTRGE). Position 314 (E314) interacts with L-arginine.

Belongs to the ATP:guanido phosphotransferase family. As to quaternary structure, monomer. As to expression, muscle (at protein level).

The enzyme catalyses L-arginine + ATP = N(omega)-phospho-L-arginine + ADP + H(+). It carries out the reaction dTDP + ATP = dTTP + ADP. Catalyzes the reversible transfer of high energy ATP gamma-phosphate group to L-arginine. Has nucleoside diphosphate kinase-like activity toward dTDP. Binds and phosphorylates dTDP using ATP as a phosphate donor. Does not phosphorylate dADP, dCDP, dGDP, dTMP or thymidine. This Penaeus vannamei (Whiteleg shrimp) protein is Arginine kinase Lit v 2.0101.